The following is a 541-amino-acid chain: MKSYTPYFMLLWSAVGIARAAKIIIVPPIMFESHLYIFKTLASALHERGHHTVFLLSEGRDIDPSNHYSLQRYPGIFNSTTSDAFLQSKMRNIFSGRLTAVELVDILDHYTKNCDMMVGNQALIQGLKKEKFDLLLVDPNDMCGFVIAHLLGVKYAVFSTGLWYPAEVGAPAPLAYVPEFNSLLTDRMNFLERMKNTGVYLISRMGVSFLVLPKYERIMQKYNLLPAKSMYDLVHGSSLWMLCTDVALEFPRPTLPNVVYVGGILTKPASPLPEDLQRWVDGAQEHGFVLVSFGAGVKYLSEDIANKLAGALGRLPQKVIWRFSGTKPKNLGNNTKLIEWLPQNDLLGHSNIRAFLSHGGLNSIFETMYHGVPVVGIPLFGDHYDTMTRVQAKGMGILLEWNTVTEGELYDALVKVINNPSYRQRAQKLSEIHKDQPGHPVNRTTYWIDYILRHDGAHHLRSAVHQISFCQYFLLDIAFVLLLGAVALYFIVSYVTKFIYRKVKSLCSRSTHSTVNGHYQNGILNGRYKGNGHIKHEKKVK.

The N-terminal stretch at M1–A20 is a signal peptide. N-linked (GlcNAc...) asparagine glycosylation is found at N78, N333, and N442. Residues Y472–V492 form a helical membrane-spanning segment.

It belongs to the UDP-glycosyltransferase family. Brain, restricted to the oligodendrocyte-containing cell layers of cerebrum and cerebellum.

It localises to the membrane. The protein localises to the endoplasmic reticulum. It carries out the reaction an N-acylsphing-4-enine + UDP-alpha-D-galactose = a beta-D-galactosyl-(1&lt;-&gt;1')-N-acylsphing-4-enine + UDP + H(+). The enzyme catalyses N-(2-hydroxy-hexanoyl)-sphing-4-enine + UDP-alpha-D-galactose = N-(2-hydroxy-hexanoyl)-beta-D-galactosyl-sphing-4-enine + UDP + H(+). It catalyses the reaction N-(2-hydroxy-hexanoyl)-sphinganine + UDP-alpha-D-galactose = N-(2-hydroxyhexanoyl)-beta-D-galactosylsphinganine + UDP + H(+). The catalysed reaction is an N-acyl-sphingoid base + UDP-alpha-D-galactose = a D-galactosylceramide + UDP + H(+). It participates in sphingolipid metabolism; galactosylceramide biosynthesis. In terms of biological role, catalyzes the transfer of galactose to ceramide, a key enzymatic step in the biosynthesis of galactocerebrosides, which are abundant sphingolipids of the myelin membrane of the central nervous system and peripheral nervous system. Galactosylates both hydroxy- and non-hydroxy fatty acid-containing ceramides and diglycerides. This chain is 2-hydroxyacylsphingosine 1-beta-galactosyltransferase, found in Rattus norvegicus (Rat).